Reading from the N-terminus, the 669-residue chain is Acyl-coenzyme A oxidase 1 (669 aa).

FAD is bound by residues threonine 152 and glycine 191. Glutamate 434 serves as the catalytic Proton acceptor. Position 544 is a phosphotyrosine (tyrosine 544). A Phosphoserine modification is found at serine 551. The short motif at 667 to 669 (AHL) is the Microbody targeting signal element.

It belongs to the acyl-CoA oxidase family. In terms of assembly, homodimer. FAD is required as a cofactor. Expressed in glia.

It localises to the peroxisome. Its subcellular location is the nucleus. It catalyses the reaction a 2,3-saturated acyl-CoA + O2 = a (2E)-enoyl-CoA + H2O2. Its pathway is lipid metabolism; peroxisomal fatty acid beta-oxidation. Catalyzes the desaturation of acyl-CoAs to 2-trans-enoyl-CoAs. First enzyme of the fatty acid beta-oxidation pathway. The protein is Acyl-coenzyme A oxidase 1 of Drosophila melanogaster (Fruit fly).